The sequence spans 93 residues: Small ribosomal subunit protein uS19 (93 aa).

This sequence belongs to the universal ribosomal protein uS19 family.

In terms of biological role, protein S19 forms a complex with S13 that binds strongly to the 16S ribosomal RNA. This chain is Small ribosomal subunit protein uS19, found in Geobacter metallireducens (strain ATCC 53774 / DSM 7210 / GS-15).